Reading from the N-terminus, the 244-residue chain is Ribosomal RNA small subunit methyltransferase G (244 aa).

S-adenosyl-L-methionine contacts are provided by residues Gly-84, Phe-89, 107–109, 135–136, and Arg-154; these read DST and AE.

It belongs to the methyltransferase superfamily. RNA methyltransferase RsmG family.

It localises to the cytoplasm. In terms of biological role, specifically methylates the N7 position of a guanine in 16S rRNA. This Nostoc punctiforme (strain ATCC 29133 / PCC 73102) protein is Ribosomal RNA small subunit methyltransferase G.